Reading from the N-terminus, the 101-residue chain is Small ribosomal subunit protein uS10 (101 aa).

This sequence belongs to the universal ribosomal protein uS10 family. Part of the 30S ribosomal subunit.

Functionally, involved in the binding of tRNA to the ribosomes. This is Small ribosomal subunit protein uS10 from Mycobacteroides abscessus (strain ATCC 19977 / DSM 44196 / CCUG 20993 / CIP 104536 / JCM 13569 / NCTC 13031 / TMC 1543 / L948) (Mycobacterium abscessus).